The following is a 1075-amino-acid chain: DNA-directed RNA polymerase subunit beta (1075 aa).

This sequence belongs to the RNA polymerase beta chain family. In plastids the minimal PEP RNA polymerase catalytic core is composed of four subunits: alpha, beta, beta', and beta''. When a (nuclear-encoded) sigma factor is associated with the core the holoenzyme is formed, which can initiate transcription.

It is found in the plastid. The protein localises to the chloroplast. The catalysed reaction is RNA(n) + a ribonucleoside 5'-triphosphate = RNA(n+1) + diphosphate. Functionally, DNA-dependent RNA polymerase catalyzes the transcription of DNA into RNA using the four ribonucleoside triphosphates as substrates. This is DNA-directed RNA polymerase subunit beta from Zea mays (Maize).